We begin with the raw amino-acid sequence, 583 residues long: Arginine--tRNA ligase (583 aa).

The short motif at 131–141 (ANPTGPMHVGH) is the 'HIGH' region element.

This sequence belongs to the class-I aminoacyl-tRNA synthetase family. In terms of assembly, monomer.

The protein resides in the cytoplasm. The catalysed reaction is tRNA(Arg) + L-arginine + ATP = L-arginyl-tRNA(Arg) + AMP + diphosphate. This Parvibaculum lavamentivorans (strain DS-1 / DSM 13023 / NCIMB 13966) protein is Arginine--tRNA ligase.